The following is a 225-amino-acid chain: Suppressor of cytokine signaling 3 (225 aa).

The tract at residues leucine 22–leucine 33 is kinase inhibitory region (KIR). An extended SH2 subdomain (ESS) region spans residues valine 34 to glycine 45. The SH2 domain occupies phenylalanine 46 to glutamate 142. The tract at residues proline 131–threonine 160 is disordered. The SOCS box domain maps to valine 177–proline 224.

As to quaternary structure, interacts with multiple activated proteins of the tyrosine kinase signaling pathway including IGF1 receptor, insulin receptor and JAK2. Binding to JAK2 is mediated through the KIR and SH2 domains to a phosphorylated tyrosine residue within the JAK2 JH1 domain. Binds specific activated tyrosine residues of the leptin, EPO, IL12, GSCF and gp130 receptors. Interaction with CSNK1E stabilizes SOCS3 protein. Component of the probable ECS(SOCS3) E3 ubiquitin-protein ligase complex which contains CUL5, RNF7/RBX2, elongin BC complex and SOCS3. Interacts with CUL5, RNF7, ELOB and ELOC. Interacts with FGFR3. Interacts with INSR. Interacts with BCL10; this interaction may interfere with BCL10-binding with PELI2. Interacts with NOD2 (via CARD domain); the interaction promotes NOD2 degradation. Post-translationally, phosphorylated on tyrosine residues after stimulation by the cytokines, IL-2, EPO or IGF1. In terms of tissue distribution, low expression in lung, spleen and thymus. Expressed in Th2 but not TH1 cells.

It functions in the pathway protein modification; protein ubiquitination. Its function is as follows. SOCS family proteins form part of a classical negative feedback system that regulates cytokine signal transduction. SOCS3 is involved in negative regulation of cytokines that signal through the JAK/STAT pathway. Inhibits cytokine signal transduction by binding to tyrosine kinase receptors including IL6ST/gp130, LIF, erythropoietin, insulin, IL12, GCSF and leptin receptors. Binding to JAK2 inhibits its kinase activity and regulates IL6 signaling. Suppresses fetal liver erythropoiesis. Regulates onset and maintenance of allergic responses mediated by T-helper type 2 cells. Probable substrate recognition component of a SCF-like ECS (Elongin BC-CUL2/5-SOCS-box protein) E3 ubiquitin-protein ligase complex which mediates the ubiquitination and subsequent proteasomal degradation of target proteins. The chain is Suppressor of cytokine signaling 3 from Mus musculus (Mouse).